Reading from the N-terminus, the 438-residue chain is Methyl-coenzyme M reductase subunit beta (438 aa).

Residue Y367 coordinates coenzyme M. A coenzyme B-binding site is contributed by G369.

The protein belongs to the methyl-coenzyme M reductase beta subunit family. In terms of assembly, MCR is a hexamer of two alpha, two beta, and two gamma chains, forming a dimer of heterotrimers. It depends on coenzyme F430 as a cofactor.

Its subcellular location is the cytoplasm. The enzyme catalyses coenzyme B + methyl-coenzyme M = methane + coenzyme M-coenzyme B heterodisulfide. It functions in the pathway one-carbon metabolism; methyl-coenzyme M reduction; methane from methyl-coenzyme M: step 1/1. Component of the methyl-coenzyme M reductase (MCR) I that catalyzes the reductive cleavage of methyl-coenzyme M (CoM-S-CH3 or 2-(methylthio)ethanesulfonate) using coenzyme B (CoB or 7-mercaptoheptanoylthreonine phosphate) as reductant which results in the production of methane and the mixed heterodisulfide of CoB and CoM (CoM-S-S-CoB). This is the final step in methanogenesis. The sequence is that of Methyl-coenzyme M reductase subunit beta (mcrB) from Methanothermus fervidus.